A 383-amino-acid chain; its full sequence is MAKHLFTSESVSEGHPDKIADQISDAVLDAIIEQDPKARVACETYVKTGMVMVGGEVTTSAWVDIEEITRETVREIGYVHSDMGFDADSCAVLNTIGKQSPDINQGVDKADPKDQGAGDQGIMFGYATNETPILMPAPITYSHLLVKKQAEVRKSGKLDFLRPDAKSQVTFQYDQGKIVGIDAVVLSTQHCDSVTTPDLREAVMEEIIKPVLPAEWINKDTNFFINPTGRFVIGGPMGDCGLTGRKIIVDTYGGAARHGGGAFSGKDPSKVDRSAAYAARYVAKNIVAAGMADRCEIQLSYAIGVADPTSIMVETFGTEKVAHEIIIEAVRQNFDLRPYGLQEMLNLLQPIYKQTAAYGHFGREEFPWEATDKAAILADFAGL.

His15 is an ATP binding site. Mg(2+) is bound at residue Asp17. Glu43 lines the K(+) pocket. The L-methionine site is built by Glu56 and Gln99. The flexible loop stretch occupies residues 99-109 (QSPDINQGVDK). ATP-binding positions include 164 to 166 (DAK), 230 to 231 (RF), Asp239, 245 to 246 (RK), Ala262, and Lys266. Asp239 provides a ligand contact to L-methionine. Residue Lys270 coordinates L-methionine.

It belongs to the AdoMet synthase family. Homotetramer; dimer of dimers. Mg(2+) serves as cofactor. It depends on K(+) as a cofactor.

Its subcellular location is the cytoplasm. The enzyme catalyses L-methionine + ATP + H2O = S-adenosyl-L-methionine + phosphate + diphosphate. Its pathway is amino-acid biosynthesis; S-adenosyl-L-methionine biosynthesis; S-adenosyl-L-methionine from L-methionine: step 1/1. Its function is as follows. Catalyzes the formation of S-adenosylmethionine (AdoMet) from methionine and ATP. The overall synthetic reaction is composed of two sequential steps, AdoMet formation and the subsequent tripolyphosphate hydrolysis which occurs prior to release of AdoMet from the enzyme. The sequence is that of S-adenosylmethionine synthase from Vibrio atlanticus (strain LGP32) (Vibrio splendidus (strain Mel32)).